Consider the following 324-residue polypeptide: CYFIP-related Rac1 interactor B (324 aa).

The N-myristoyl glycine moiety is linked to residue Gly-2. Residue Lys-74 forms a Glycyl lysine isopeptide (Lys-Gly) (interchain with G-Cter in ubiquitin) linkage.

This sequence belongs to the CYRI family. As to quaternary structure, interacts with RAC1 (GTP-bound form preferentially). In terms of processing, ubiquitinated at Lys-74 upon Salmonella bacterial infection. Expressed in pancreatic ducts (at protein level).

The protein resides in the membrane. It localises to the mitochondrion. Its function is as follows. Negatively regulates RAC1 signaling and RAC1-driven cytoskeletal remodeling. Regulates chemotaxis, cell migration and epithelial polarization by controlling the polarity, plasticity, duration and extent of protrusions. Limits Rac1 mediated activation of the Scar/WAVE complex, focuses protrusion signals and regulates pseudopod complexity by inhibiting Scar/WAVE-induced actin polymerization. Protects against Salmonella bacterial infection. Attenuates processes such as macropinocytosis, phagocytosis and cell migration and restrict sopE-mediated bacterial entry. Also restricts infection mediated by Mycobacterium tuberculosis and Listeria monocytogenes. Involved in the regulation of mitochondrial dynamics and oxidative stress. This chain is CYFIP-related Rac1 interactor B (Cyrib), found in Mus musculus (Mouse).